The following is a 299-amino-acid chain: Regucalcin (299 aa).

Glu18 contributes to the a divalent metal cation binding site. Substrate-binding residues include Arg101, Asn103, and Glu121. Lys144 carries the post-translational modification N6-succinyllysine. A divalent metal cation contacts are provided by Asn154 and Asp204. The Proton donor/acceptor role is filled by Asp204. Residues Lys244 and Lys253 each carry the N6-succinyllysine modification.

The protein belongs to the SMP-30/CGR1 family. Monomer. The cofactor is Zn(2+). Requires Mn(2+) as cofactor. It depends on Ca(2+) as a cofactor. Mg(2+) is required as a cofactor.

The protein localises to the cytoplasm. It carries out the reaction D-glucono-1,5-lactone + H2O = D-gluconate + H(+). It functions in the pathway cofactor biosynthesis; L-ascorbate biosynthesis via UDP-alpha-D-glucuronate pathway; L-ascorbate from UDP-alpha-D-glucuronate: step 3/4. Functionally, gluconolactonase with low activity towards other sugar lactones, including gulonolactone and galactonolactone. Catalyzes a key step in ascorbic acid (vitamin C) biosynthesis. Can also hydrolyze diisopropyl phosphorofluoridate and phenylacetate (in vitro). Calcium-binding protein. Modulates Ca(2+) signaling, and Ca(2+)-dependent cellular processes and enzyme activities. The protein is Regucalcin (RGN) of Oryctolagus cuniculus (Rabbit).